Here is a 190-residue protein sequence, read N- to C-terminus: MVSFVQLVVQIREIFEHKMVDVDEVMKLMGSYKSDINEWRRFAIFDMNKYTRNLVDIGNGKYNLMILCWGPGMASSVHDHTDAHCFVKILDGELTETKYDWPKKKHTPLETIENKTYGLNGVSYMNDELGLHRMENQSHSNGAVSLHLYIPPYSTCNAFDERTGKKTKCTVTFYSKYGEKIDYHGSKEGK.

Residues His-78, His-80, and His-132 each contribute to the Fe cation site. The 3'-(S-cysteinyl)-tyrosine (Cys-Tyr) cross-link spans Cys-85 to Tyr-149.

Belongs to the cysteine dioxygenase family. Requires Fe cation as cofactor. In terms of processing, the thioether cross-link between Cys-85 and Tyr-149 plays a structural role through stabilizing the Fe(2+) ion, and prevents the production of highly damaging free hydroxyl radicals by holding the oxygen radical via hydroxyl hydrogen.

The enzyme catalyses L-cysteine + O2 = 3-sulfino-L-alanine + H(+). It participates in organosulfur biosynthesis; taurine biosynthesis; hypotaurine from L-cysteine: step 1/2. The polypeptide is Cysteine dioxygenase (cdo-1) (Caenorhabditis briggsae).